We begin with the raw amino-acid sequence, 327 residues long: uncharacterized protein (327 aa).

Residues 12-31 (PLGTTKSYHMNTSTVSPPSP) form a disordered region. 2 helical membrane-spanning segments follow: residues 183 to 203 (VSSPSVEVYIAGCCGGVPVIL) and 292 to 312 (VGVGIGLGMCLGVGIGVGLLM).

The protein resides in the membrane. This is an uncharacterized protein from Arabidopsis thaliana (Mouse-ear cress).